The following is a 499-amino-acid chain: Lipopolysaccharide core galacturonosyltransferase RgtA (499 aa).

Helical transmembrane passes span 11–31 (TAGL…IVLP), 74–94 (IGAL…FYGL), 103–123 (EALA…SYMA), 125–145 (QDLT…YGFF), 165–185 (IGLI…IAIL), 199–219 (MLAA…WLQG), 248–268 (LLAF…IFAA), 291–311 (MMLA…STTV), 316–336 (LDPF…AAGL), and 351–371 (VLMA…GLIG).

Belongs to the glycosyltransferase 83 family.

The protein localises to the cell inner membrane. It functions in the pathway bacterial outer membrane biogenesis; LPS core biosynthesis. Involved in the modification of the lipopolysaccharide (LPS) inner core. Catalyzes the transfer of a galacturonic acid (GalA) residue to the 4-position of the outer Kdo (3-deoxy-D-manno-octulosonic acid) residue of the LPS inner core, using dodecaprenyl phosphate-GalA as the donor substrate. GalA addition by RgtA is required for RgtB activity. The chain is Lipopolysaccharide core galacturonosyltransferase RgtA from Rhizobium johnstonii (strain DSM 114642 / LMG 32736 / 3841) (Rhizobium leguminosarum bv. viciae).